We begin with the raw amino-acid sequence, 103 residues long: NADH-quinone oxidoreductase subunit K (103 aa).

Transmembrane regions (helical) follow at residues 6 to 26 (LSHFLILGAILFAISVVGIFL), 32 to 52 (LVLLMAIELMLLAVNMNFVAF), and 63 to 83 (IFVFFILTVAAAESAIGLAIL).

Belongs to the complex I subunit 4L family. In terms of assembly, NDH-1 is composed of 14 different subunits. Subunits NuoA, H, J, K, L, M, N constitute the membrane sector of the complex.

Its subcellular location is the cell inner membrane. The catalysed reaction is a quinone + NADH + 5 H(+)(in) = a quinol + NAD(+) + 4 H(+)(out). In terms of biological role, NDH-1 shuttles electrons from NADH, via FMN and iron-sulfur (Fe-S) centers, to quinones in the respiratory chain. The immediate electron acceptor for the enzyme in this species is believed to be ubiquinone. Couples the redox reaction to proton translocation (for every two electrons transferred, four hydrogen ions are translocated across the cytoplasmic membrane), and thus conserves the redox energy in a proton gradient. This Dechloromonas aromatica (strain RCB) protein is NADH-quinone oxidoreductase subunit K.